The chain runs to 752 residues: MTAGSVAAPQIIPIRIPPPGKAKHEIDSSTPVEIKSESPDVRVLYTLDGSKPELTKRPGFADSTLKYTEPVRLPVGKVYVKAMAISIDGRQSAVVTKVFVVEPSASDERELNAHDEDDSVKNDTAIDGKDVVENGTGVSSVKYLDISSNEAHRALKGPRFLSQRLGPGSSARLTAQNSQNQSADVVESPLKNLTNTQISRIQRETDFLRCPKCLSHRPSDPFARFCLHCGAPVPPIPGQRLPPTEGGQMGLCMHCKTMVPLNTAICVVCESPLDQQLQPQATLRLQDKFICHSCGTGNPAHITHCVTCESQLLRQARPVLSGQRAAPVPSSQGKMVSCSKCNRVNHSDARFCDWCGAKPGHKASSVKCSQCGASSHPYANHCGGCGVFLDGPPRMPLQVNQRQDAEEMQQTASAAELATAPPSVGLRMCADAQTQTVGLFFPSNTELKKRSQQREAELSRQEQMRDRKPLLTAISPGRGFWRKQLDHICAHLRSYTQNNTEFRALIGEPRLGRMISAVIQEDSYEVSLRINFISAPPEESRSSSAGQRSRSVTSESQNLSSVTEGRNSASPENNINTTGSEVKKKKKKKIGTSDVTENQPESKDSLLLKEVGPEGRGRIPAVQQLLDEGADPACLGKDGRPALVAAVLNGHHDVIPVLVQREADVNQASGPLKNTALHEAAALGDEGLKSVEILLGCNASIRKQNDRGQTPYDIAVAAGSSSVLSLMAAHLGQGLLLRHTKARSLSGLDTFS.

2 DZANK-type zinc fingers span residues 210–270 and 338–386; these read CPKC…VVCE and CSKC…GGCG. Over residues 448 to 469 the composition is skewed to basic and acidic residues; it reads KKRSQQREAELSRQEQMRDRKP. 2 disordered regions span residues 448–471 and 536–614; these read KKRSQQREAELSRQEQMRDRKPLL and PPEE…VGPE. The span at 536-554 shows a compositional bias: low complexity; that stretch reads PPEESRSSSAGQRSRSVTS. Over residues 555-580 the composition is skewed to polar residues; the sequence is ESQNLSSVTEGRNSASPENNINTTGS. Over residues 600–614 the composition is skewed to basic and acidic residues; that stretch reads PESKDSLLLKEVGPE. ANK repeat units lie at residues 638-667, 672-703, and 707-737; these read DGRPALVAAVLNGHHDVIPVLVQREADVNQ, LKNTALHEAAALGDEGLKSVEILLGCNASIRK, and RGQTPYDIAVAAGSSSVLSLMAAHLGQGLLL.

The protein localises to the cytoplasm. Its subcellular location is the cytoskeleton. It localises to the microtubule organizing center. The protein resides in the centrosome. It is found in the cilium basal body. Functionally, required for the intracellular transport of organelles and vesicles, and is essential for the photoreceptor's outer segments formation, maintenance and function. The polypeptide is Double zinc ribbon and ankyrin repeat-containing protein 1 (dzank1) (Danio rerio (Zebrafish)).